A 570-amino-acid polypeptide reads, in one-letter code: Probable D-xylulose kinase A (570 aa).

Residues His95, Arg166, Asp282, and Asn283 each coordinate substrate. ATP-binding positions include Trp364, 469–470, and Asn473; that span reads GG.

The protein belongs to the FGGY kinase family.

It is found in the cytoplasm. It catalyses the reaction D-xylulose + ATP = D-xylulose 5-phosphate + ADP + H(+). Its function is as follows. Highly specific D-xylulose kinase which participates in the catabolism of xylose. Xylose is a major component of hemicelluloses such as xylan. Most fungi utilize D-xylose via three enzymatic reactions, xylose reductase (XR), xylitol dehydrogenase (XDH), and xylulokinase, to form xylulose 5-phosphate, which enters pentose phosphate pathway. This chain is Probable D-xylulose kinase A (xkiA), found in Aspergillus niger (strain ATCC MYA-4892 / CBS 513.88 / FGSC A1513).